Consider the following 287-residue polypeptide: ATP synthase gamma chain (287 aa).

Belongs to the ATPase gamma chain family. In terms of assembly, F-type ATPases have 2 components, CF(1) - the catalytic core - and CF(0) - the membrane proton channel. CF(1) has five subunits: alpha(3), beta(3), gamma(1), delta(1), epsilon(1). CF(0) has three main subunits: a, b and c.

It is found in the cell inner membrane. In terms of biological role, produces ATP from ADP in the presence of a proton gradient across the membrane. The gamma chain is believed to be important in regulating ATPase activity and the flow of protons through the CF(0) complex. This Klebsiella pneumoniae subsp. pneumoniae (strain ATCC 700721 / MGH 78578) protein is ATP synthase gamma chain.